Reading from the N-terminus, the 288-residue chain is Acetyl-coenzyme A carboxylase carboxyl transferase subunit beta (288 aa).

The 255-residue stretch at 34-288 (LFAKCPACKH…HLVSFHGGGQ (255 aa)) folds into the CoA carboxyltransferase N-terminal domain. Residues Cys38, Cys41, Cys56, and Cys59 each coordinate Zn(2+). The segment at 38 to 59 (CPACKHMIYKKDLGLAKICPTC) adopts a C4-type zinc-finger fold.

The protein belongs to the AccD/PCCB family. As to quaternary structure, acetyl-CoA carboxylase is a heterohexamer composed of biotin carboxyl carrier protein (AccB), biotin carboxylase (AccC) and two subunits each of ACCase subunit alpha (AccA) and ACCase subunit beta (AccD). It depends on Zn(2+) as a cofactor.

It localises to the cytoplasm. It carries out the reaction N(6)-carboxybiotinyl-L-lysyl-[protein] + acetyl-CoA = N(6)-biotinyl-L-lysyl-[protein] + malonyl-CoA. Its pathway is lipid metabolism; malonyl-CoA biosynthesis; malonyl-CoA from acetyl-CoA: step 1/1. In terms of biological role, component of the acetyl coenzyme A carboxylase (ACC) complex. Biotin carboxylase (BC) catalyzes the carboxylation of biotin on its carrier protein (BCCP) and then the CO(2) group is transferred by the transcarboxylase to acetyl-CoA to form malonyl-CoA. This chain is Acetyl-coenzyme A carboxylase carboxyl transferase subunit beta, found in Streptococcus pyogenes serotype M49 (strain NZ131).